The chain runs to 126 residues: Urease subunit beta (126 aa).

Belongs to the urease beta subunit family. In terms of assembly, heterotrimer of UreA (gamma), UreB (beta) and UreC (alpha) subunits. Three heterotrimers associate to form the active enzyme.

It is found in the cytoplasm. The enzyme catalyses urea + 2 H2O + H(+) = hydrogencarbonate + 2 NH4(+). The protein operates within nitrogen metabolism; urea degradation; CO(2) and NH(3) from urea (urease route): step 1/1. This chain is Urease subunit beta, found in Frankia casuarinae (strain DSM 45818 / CECT 9043 / HFP020203 / CcI3).